We begin with the raw amino-acid sequence, 506 residues long: MDMNTLLSLSWHLMVPEFIILGAAILLSICDLFFKLNHRYVALGAIAAVVLAIVSLITLYSEPAGDILNGSFVLDGFSKGFKTLLLGGAALILCTAMSDDKKNPIEDKGEYYYLFLMALLGAMFMASSVDFVTLFVGLELLSLSSYILVGIRKKNRASNEAAMKYVINGGIGTAITLFGMSYLYGITGSTNIVDMQKVFAGELASGIQLLLALAFLLLLVGLSFKIATVPFHMWAPDVYEGAATPVTAFLGTISKMAGFLLIIRLFLMVFASVSVQGDMQSLYGRMSIYIAVLASITMIIGNVVALKQYNVKRLFAYSGIAHAGYLLVPLVALSPFTMDSMWFYMLAYMLMNIGAFAIIHGLILQSNKENITIFTGLYKRSPFTAIVMTIFILSLAGIPGTAGFIGKINIFLGALHVEPAHYVLASIMMGTTVISFVYYFRILQQMFFRTGEVEEKIRLPLNIKIVMSFCAISIVILGIVPMIGYNFFYEYFPLMKDFFFLGNVVQ.

14 consecutive transmembrane segments (helical) span residues 14–34 (MVPE…DLFF), 40–60 (YVAL…ITLY), 72–92 (FVLD…AALI), 109–129 (GEYY…ASSV), 131–151 (FVTL…LVGI), 166–186 (VING…LYGI), 209–229 (LLLA…IATV), 256–276 (MAGF…VSVQ), 286–306 (MSIY…VVAL), 314–334 (LFAY…VALS), 343–363 (FYML…HGLI), 385–405 (AIVM…AGFI), 420–440 (AHYV…VYYF), and 465–485 (IVMS…MIGY).

It belongs to the complex I subunit 2 family. As to quaternary structure, NDH-1 is composed of 14 different subunits. Subunits NuoA, H, J, K, L, M, N constitute the membrane sector of the complex.

The protein resides in the cell membrane. It catalyses the reaction a quinone + NADH + 5 H(+)(in) = a quinol + NAD(+) + 4 H(+)(out). Functionally, NDH-1 shuttles electrons from NADH, via FMN and iron-sulfur (Fe-S) centers, to quinones in the respiratory chain. The immediate electron acceptor for the enzyme in this species is believed to be a menaquinone. Couples the redox reaction to proton translocation (for every two electrons transferred, four hydrogen ions are translocated across the cytoplasmic membrane), and thus conserves the redox energy in a proton gradient. The chain is NADH-quinone oxidoreductase subunit N from Bacillus anthracis.